The following is a 516-amino-acid chain: GMP synthase [glutamine-hydrolyzing] (516 aa).

The Glutamine amidotransferase type-1 domain maps to Ser7 to Asp203. Cys84 acts as the Nucleophile in catalysis. Catalysis depends on residues His177 and Glu179. The GMPS ATP-PPase domain occupies Trp204 to Arg391. Ser231 to Thr237 is a binding site for ATP.

Homodimer.

The catalysed reaction is XMP + L-glutamine + ATP + H2O = GMP + L-glutamate + AMP + diphosphate + 2 H(+). It participates in purine metabolism; GMP biosynthesis; GMP from XMP (L-Gln route): step 1/1. Its function is as follows. Catalyzes the synthesis of GMP from XMP. The protein is GMP synthase [glutamine-hydrolyzing] of Chlorobaculum tepidum (strain ATCC 49652 / DSM 12025 / NBRC 103806 / TLS) (Chlorobium tepidum).